The sequence spans 396 residues: G-protein coupled receptor 84 (396 aa).

At Met-1–Trp-26 the chain is on the extracellular side. Residues Asn-3 and Asn-8 are each glycosylated (N-linked (GlcNAc...) asparagine). The helical transmembrane segment at Gly-27 to Ile-47 threads the bilayer. At Gln-48–Leu-57 the chain is on the cytoplasmic side. Residues Leu-58–Val-78 traverse the membrane as a helical segment. The Extracellular portion of the chain corresponds to Asp-79–Arg-94. The helical transmembrane segment at Val-95–Ala-115 threads the bilayer. Residues Leu-116–Thr-144 lie on the Cytoplasmic side of the membrane. A helical transmembrane segment spans residues Trp-145–Val-165. The Extracellular segment spans residues Cys-166 to Thr-180. The helical transmembrane segment at Ile-181–Ile-201 threads the bilayer. Topologically, residues His-202–Met-320 are cytoplasmic. Phosphoserine is present on residues Ser-221 and Ser-224. Residues Arg-244–Ser-311 are disordered. The segment covering Ser-247 to Ser-260 has biased composition (low complexity). Phosphothreonine occurs at positions 263 and 264. A helical transmembrane segment spans residues Cys-321–Leu-341. Over Asp-342–His-352 the chain is Extracellular. Residues Met-353 to Met-373 traverse the membrane as a helical segment. At Asn-374 to His-396 the chain is on the cytoplasmic side.

It belongs to the G-protein coupled receptor 1 family. In terms of assembly, interacts with ARRB2 and ARR3. In terms of processing, phosphorylated by a subset of GPR84-activating ligands. Constitutively phosphorylated at Ser-221 and Ser-224 in the absence of 2-HTP. By contrast, Thr-263 and Thr-264 are phosphorylated only following prior cell treatment with 2-HTP. Expressed predominantly in hematopoietic tissues. High levels detected in the bone marrow and lower levels in the peripheral leukocytes and lung. Also expressed in brain, heart, muscle, colon, thymus, spleen, kidney, liver, placenta and intestine. Within the leukocyte population expression is higher in neutrophils and eosinophils relative to T- or B-lymphocytes.

It is found in the cell membrane. Functionally, g protein-coupled receptor that responds endogenously to dietary fatty acids or nutrient, specifically medium-chain free fatty acid (FFA) with carbon chain lengths of C9 to C14. Capric acid (C10:0), undecanoic acid (C11:0) and lauric acid (C12:0) are the most potent agonists. In immune cells, functions as a pro-inflammatory receptor via 6-OAU and promotes the expression of pro-inflammatory mediators such as TNFalpha, IL-6 and IL-12B as well as stimulating chemotactic responses through activation of signaling mediators AKT, ERK and NF-kappa-B. In addition, triggers increased bacterial adhesion and phagocytosis in macrophages and regulates pro-inflammatory function via enhancing NLRP3 inflammasome activation. Also plays an important role in inflammation by modulating neutrophil functions. Mechanistically, promotes neutrophil chemotaxis, reactive oxygen species (ROS) production and degranulation via LYN-AKT/ERK pathway. To regulate ROS, communicates with the two formyl peptide receptors FPR2 and FPR1 to control the NADPH oxidase activity in neutrophils. The sequence is that of G-protein coupled receptor 84 (GPR84) from Homo sapiens (Human).